Here is a 205-residue protein sequence, read N- to C-terminus: Small ribosomal subunit protein uS4 (205 aa).

Residues 18 to 46 (NIWGRPKSPVNRREYGPGQHGQRRKGKLS) are disordered. Residues 94–157 (RRLDTVVYRA…KQLAFVLEAS (64 aa)) form the S4 RNA-binding domain.

This sequence belongs to the universal ribosomal protein uS4 family. Part of the 30S ribosomal subunit. Contacts protein S5. The interaction surface between S4 and S5 is involved in control of translational fidelity.

In terms of biological role, one of the primary rRNA binding proteins, it binds directly to 16S rRNA where it nucleates assembly of the body of the 30S subunit. Functionally, with S5 and S12 plays an important role in translational accuracy. The chain is Small ribosomal subunit protein uS4 from Rhodopseudomonas palustris (strain HaA2).